A 334-amino-acid chain; its full sequence is Phenylalanine--tRNA ligase alpha subunit (334 aa).

Residue E249 coordinates Mg(2+).

It belongs to the class-II aminoacyl-tRNA synthetase family. Phe-tRNA synthetase alpha subunit type 1 subfamily. In terms of assembly, tetramer of two alpha and two beta subunits. The cofactor is Mg(2+).

Its subcellular location is the cytoplasm. The catalysed reaction is tRNA(Phe) + L-phenylalanine + ATP = L-phenylalanyl-tRNA(Phe) + AMP + diphosphate + H(+). This Desulfatibacillum aliphaticivorans protein is Phenylalanine--tRNA ligase alpha subunit.